Reading from the N-terminus, the 224-residue chain is 7-cyano-7-deazaguanine synthase (224 aa).

Residue 10-20 (LSGGLDSATVV) coordinates ATP. 4 residues coordinate Zn(2+): Cys-189, Cys-199, Cys-202, and Cys-205.

This sequence belongs to the QueC family. It depends on Zn(2+) as a cofactor.

It catalyses the reaction 7-carboxy-7-deazaguanine + NH4(+) + ATP = 7-cyano-7-deazaguanine + ADP + phosphate + H2O + H(+). It participates in purine metabolism; 7-cyano-7-deazaguanine biosynthesis. Its function is as follows. Catalyzes the ATP-dependent conversion of 7-carboxy-7-deazaguanine (CDG) to 7-cyano-7-deazaguanine (preQ(0)). This is 7-cyano-7-deazaguanine synthase from Pseudomonas aeruginosa (strain LESB58).